A 346-amino-acid polypeptide reads, in one-letter code: Small ribosomal subunit biogenesis GTPase RsgA (346 aa).

Positions 1–26 (MAKRKLTQNQTRRIQSNNAKTLHRHK) are disordered. Residues 7-20 (TQNQTRRIQSNNAK) show a composition bias toward polar residues. In terms of domain architecture, CP-type G spans 103–271 (ENEISRPDYY…LIDSPGIREF (169 aa)). Residues 159-162 (NKVD) and 213-221 (GQSGVGKSS) contribute to the GTP site. Residues Cys295, Cys300, His302, and Cys308 each coordinate Zn(2+).

The protein belongs to the TRAFAC class YlqF/YawG GTPase family. RsgA subfamily. As to quaternary structure, monomer. Associates with 30S ribosomal subunit, binds 16S rRNA. Zn(2+) is required as a cofactor.

Its subcellular location is the cytoplasm. Its function is as follows. One of several proteins that assist in the late maturation steps of the functional core of the 30S ribosomal subunit. Helps release RbfA from mature subunits. May play a role in the assembly of ribosomal proteins into the subunit. Circularly permuted GTPase that catalyzes slow GTP hydrolysis, GTPase activity is stimulated by the 30S ribosomal subunit. The sequence is that of Small ribosomal subunit biogenesis GTPase RsgA from Haemophilus influenzae (strain PittGG).